The primary structure comprises 286 residues: Ribose-5-phosphate isomerase (286 aa).

This sequence belongs to the ribose 5-phosphate isomerase family.

The protein resides in the cytoplasm. The enzyme catalyses aldehydo-D-ribose 5-phosphate = D-ribulose 5-phosphate. It functions in the pathway carbohydrate degradation; pentose phosphate pathway; D-ribose 5-phosphate from D-ribulose 5-phosphate (non-oxidative stage): step 1/1. This Mycosarcoma maydis (Corn smut fungus) protein is Ribose-5-phosphate isomerase (RKI1).